Consider the following 427-residue polypeptide: Enolase (427 aa).

Residue Gln163 coordinates (2R)-2-phosphoglycerate. Catalysis depends on Glu205, which acts as the Proton donor. Mg(2+)-binding residues include Asp242, Glu285, and Asp312. (2R)-2-phosphoglycerate contacts are provided by Lys337, Arg366, Ser367, and Lys388. The active-site Proton acceptor is Lys337.

It belongs to the enolase family. Requires Mg(2+) as cofactor.

The protein localises to the cytoplasm. Its subcellular location is the secreted. The protein resides in the cell surface. The enzyme catalyses (2R)-2-phosphoglycerate = phosphoenolpyruvate + H2O. It participates in carbohydrate degradation; glycolysis; pyruvate from D-glyceraldehyde 3-phosphate: step 4/5. Its function is as follows. Catalyzes the reversible conversion of 2-phosphoglycerate (2-PG) into phosphoenolpyruvate (PEP). It is essential for the degradation of carbohydrates via glycolysis. This Azorhizobium caulinodans (strain ATCC 43989 / DSM 5975 / JCM 20966 / LMG 6465 / NBRC 14845 / NCIMB 13405 / ORS 571) protein is Enolase.